The following is a 267-amino-acid chain: Mannose-specific lectin 1 (267 aa).

Positions Met1 to Ala26 are cleaved as a signal peptide. 2 consecutive Bulb-type lectin domains span residues Thr29–Pro134 and Asn148–Lys255. Beta-D-mannose is bound by residues Gln54–Asn58, Tyr62, Trp66, Gln67, Gln173–Asn177, Tyr181, and Tyr185–Gln188. Positions Gln54–Tyr62 match the Carbohydrate-binding motif 1 motif. 2 disulfides stabilise this stretch: Cys57-Cys77 and Cys176-Cys198. The Carbohydrate-binding motif 2 motif lies at Gln173–Tyr181.

In terms of assembly, forms heterotetramer of 2 chains 1 and 2 chains 2 arranged as a dimer of chain 1 and chain 2 heterodimers.

It localises to the secreted. Its function is as follows. Mannose-specific lectin. Shows agglutinating activity towards erythrocytes from rabbit. In Colocasia esculenta (Wild taro), this protein is Mannose-specific lectin 1.